Consider the following 221-residue polypeptide: Probable septum site-determining protein MinC (221 aa).

The protein belongs to the MinC family. In terms of assembly, interacts with MinD and FtsZ.

Functionally, cell division inhibitor that blocks the formation of polar Z ring septums. Rapidly oscillates between the poles of the cell to destabilize FtsZ filaments that have formed before they mature into polar Z rings. Prevents FtsZ polymerization. The polypeptide is Probable septum site-determining protein MinC (Shewanella frigidimarina (strain NCIMB 400)).